The sequence spans 416 residues: UDP-N-acetylglucosamine 1-carboxyvinyltransferase (416 aa).

Residue 22–23 (KN) coordinates phosphoenolpyruvate. Residue R92 coordinates UDP-N-acetyl-alpha-D-glucosamine. C116 serves as the catalytic Proton donor. C116 is subject to 2-(S-cysteinyl)pyruvic acid O-phosphothioketal. Residues 121–125 (RPVDQ), D304, and I326 each bind UDP-N-acetyl-alpha-D-glucosamine.

It belongs to the EPSP synthase family. MurA subfamily.

Its subcellular location is the cytoplasm. The catalysed reaction is phosphoenolpyruvate + UDP-N-acetyl-alpha-D-glucosamine = UDP-N-acetyl-3-O-(1-carboxyvinyl)-alpha-D-glucosamine + phosphate. Its pathway is cell wall biogenesis; peptidoglycan biosynthesis. Its function is as follows. Cell wall formation. Adds enolpyruvyl to UDP-N-acetylglucosamine. This is UDP-N-acetylglucosamine 1-carboxyvinyltransferase from Cupriavidus taiwanensis (strain DSM 17343 / BCRC 17206 / CCUG 44338 / CIP 107171 / LMG 19424 / R1) (Ralstonia taiwanensis (strain LMG 19424)).